The chain runs to 163 residues: Developmental pluripotency-associated protein 3 (163 aa).

In terms of tissue distribution, preferentially expressed in oocyte.

It is found in the nucleus. It localises to the cytoplasm. Functionally, primordial germ cell (PGCs)-specific protein involved in epigenetic chromatin reprogramming in the zygote following fertilization. In zygotes, DNA demethylation occurs selectively in the paternal pronucleus before the first cell division, while the adjacent maternal pronucleus and certain paternally-imprinted loci are protected from this process. Participates in protection of DNA methylation in the maternal pronucleus by preventing conversion of 5mC to 5hmC: specifically recognizes and binds histone H3 dimethylated at 'Lys-9' (H3K9me2) on maternal genome, and protects maternal genome from TET3-mediated conversion to 5hmC and subsequent DNA demethylation. Does not bind paternal chromatin, which is mainly packed into protamine and does not contain much H3K9me2 mark. Also protects imprinted loci that are marked with H3K9me2 in mature sperm from DNA demethylation in early embryogenesis. May be important for the totipotent/pluripotent states continuing through preimplantation development. Also involved in chromatin condensation in oocytogenesis. The polypeptide is Developmental pluripotency-associated protein 3 (DPPA3) (Bos taurus (Bovine)).